Here is a 215-residue protein sequence, read N- to C-terminus: Interleukin-12 subunit alpha (215 aa).

Residues 1 to 22 (MCQSRYLLFLATLALLNHLSLA) form the signal peptide. 3 disulfide bridges follow: cysteine 33-cysteine 106, cysteine 60-cysteine 192, and cysteine 81-cysteine 119. Asparagine 89 carries an N-linked (GlcNAc...) asparagine glycan.

This sequence belongs to the IL-6 superfamily. As to quaternary structure, heterodimer with IL12B; disulfide-linked. This heterodimer is known as interleukin IL-12. Heterodimer with EBI3/IL27B; not disulfide-linked. This heterodimer is known as interleukin IL-35. Interacts with NBR1; this interaction promotes IL-12 secretion.

The protein localises to the secreted. Heterodimerizes with IL12B to form the IL-12 cytokine or with EBI3/IL27B to form the IL-35 cytokine. IL-12 is primarily produced by professional antigen-presenting cells (APCs) such as B-cells and dendritic cells (DCs) as well as macrophages and granulocytes and regulates T-cell and natural killer-cell responses, induces the production of interferon-gamma (IFN-gamma), favors the differentiation of T-helper 1 (Th1) cells and is an important link between innate resistance and adaptive immunity. Mechanistically, exerts its biological effects through a receptor composed of IL12R1 and IL12R2 subunits. Binding to the receptor results in the rapid tyrosine phosphorylation of a number of cellular substrates including the JAK family kinases TYK2 and JAK2. In turn, recruited STAT4 gets phosphorylated and translocates to the nucleus where it regulates cytokine/growth factor responsive genes. As part of IL-35, plays essential roles in maintaining the immune homeostasis of the liver microenvironment and also functions as an immune-suppressive cytokine. Mediates biological events through unconventional receptors composed of IL12RB2 and gp130/IL6ST heterodimers or homodimers. Signaling requires the transcription factors STAT1 and STAT4, which form a unique heterodimer that binds to distinct DNA sites. The sequence is that of Interleukin-12 subunit alpha (Il12a) from Mus musculus (Mouse).